Reading from the N-terminus, the 302-residue chain is Oxygen-dependent coproporphyrinogen-III oxidase (302 aa).

Substrate is bound at residue Ser94. 2 residues coordinate a divalent metal cation: His98 and His108. The active-site Proton donor is His108. 110–112 (NVR) contacts substrate. A divalent metal cation is bound by residues His147 and His177. The interval 242–277 (YVEFNLVWDRGTLFGLQSGGRTESILMSMPPLARWE) is important for dimerization. 260 to 262 (GGR) contributes to the substrate binding site.

It belongs to the aerobic coproporphyrinogen-III oxidase family. As to quaternary structure, homodimer. Requires a divalent metal cation as cofactor.

The protein localises to the cytoplasm. The catalysed reaction is coproporphyrinogen III + O2 + 2 H(+) = protoporphyrinogen IX + 2 CO2 + 2 H2O. It functions in the pathway porphyrin-containing compound metabolism; protoporphyrin-IX biosynthesis; protoporphyrinogen-IX from coproporphyrinogen-III (O2 route): step 1/1. Involved in the heme biosynthesis. Catalyzes the aerobic oxidative decarboxylation of propionate groups of rings A and B of coproporphyrinogen-III to yield the vinyl groups in protoporphyrinogen-IX. The polypeptide is Oxygen-dependent coproporphyrinogen-III oxidase (Photorhabdus laumondii subsp. laumondii (strain DSM 15139 / CIP 105565 / TT01) (Photorhabdus luminescens subsp. laumondii)).